The chain runs to 158 residues: MQCPSCQNTDSRVLESRAAEGGRSVRRRRECLNCEFRFTTYERVEMVPITVIKRNGHREIFNRSKLLHGLSRACEKTGLTPSKLEEIVDNLELSLQQSSSREITSSEIGELVLSHLKGLSEVAYVRFASVYRHFRSVSDFVSTLEGMNADKAELAALV.

Residues 3 to 34 fold into a zinc finger; it reads CPSCQNTDSRVLESRAAEGGRSVRRRRECLNC. The region spanning 49–139 is the ATP-cone domain; the sequence is ITVIKRNGHR…VYRHFRSVSD (91 aa).

It belongs to the NrdR family. The cofactor is Zn(2+).

Functionally, negatively regulates transcription of bacterial ribonucleotide reductase nrd genes and operons by binding to NrdR-boxes. This chain is Transcriptional repressor NrdR, found in Synechococcus sp. (strain CC9311).